Here is a 229-residue protein sequence, read N- to C-terminus: Ribonuclease 3 (229 aa).

The RNase III domain occupies 5–127 (LDRLERKLGY…LIGAIYQDAD (123 aa)). Glu-40 contributes to the Mg(2+) binding site. Asp-44 is a catalytic residue. The Mg(2+) site is built by Asp-113 and Glu-116. Glu-116 is an active-site residue. In terms of domain architecture, DRBM spans 154 to 224 (DPKTRLQEFL…AAAALIALGV (71 aa)).

Belongs to the ribonuclease III family. In terms of assembly, homodimer. It depends on Mg(2+) as a cofactor.

The protein localises to the cytoplasm. The catalysed reaction is Endonucleolytic cleavage to 5'-phosphomonoester.. Digests double-stranded RNA. Involved in the processing of primary rRNA transcript to yield the immediate precursors to the large and small rRNAs (23S and 16S). Processes some mRNAs, and tRNAs when they are encoded in the rRNA operon. Processes pre-crRNA and tracrRNA of type II CRISPR loci if present in the organism. This chain is Ribonuclease 3, found in Pseudomonas entomophila (strain L48).